Consider the following 94-residue polypeptide: Integration host factor subunit beta (94 aa).

The protein belongs to the bacterial histone-like protein family. In terms of assembly, heterodimer of an alpha and a beta chain.

In terms of biological role, this protein is one of the two subunits of integration host factor, a specific DNA-binding protein that functions in genetic recombination as well as in transcriptional and translational control. This is Integration host factor subunit beta from Edwardsiella ictaluri (strain 93-146).